A 244-amino-acid polypeptide reads, in one-letter code: Mast cell protease 2 (244 aa).

Residues 1–18 (MQALLFLMALLLPSGAGA) form the signal peptide. A propeptide spans 19-20 (EE) (activation peptide). In terms of domain architecture, Peptidase S1 spans 21 to 242 (IIGGVEAKPH…YLPWIYKVLK (222 aa)). Residue Asn-44 is glycosylated (N-linked (GlcNAc...) asparagine). An intrachain disulfide couples Cys-50 to Cys-66. Residues His-65 and Asp-109 each act as charge relay system in the active site. Disulfide bonds link Cys-143–Cys-208 and Cys-174–Cys-187. Ser-202 (charge relay system) is an active-site residue.

Belongs to the peptidase S1 family. Granzyme subfamily. As to expression, mucosal mast cells.

This is Mast cell protease 2 (Mcpt2) from Mus musculus (Mouse).